A 431-amino-acid polypeptide reads, in one-letter code: Enolase (431 aa).

Residue Gln167 participates in (2R)-2-phosphoglycerate binding. Residue Glu209 is the Proton donor of the active site. Residues Asp246, Glu290, and Asp317 each coordinate Mg(2+). (2R)-2-phosphoglycerate is bound by residues Lys342, Arg371, Ser372, and Lys393. Lys342 functions as the Proton acceptor in the catalytic mechanism.

The protein belongs to the enolase family. In terms of assembly, component of the RNA degradosome, a multiprotein complex involved in RNA processing and mRNA degradation. Mg(2+) is required as a cofactor.

Its subcellular location is the cytoplasm. The protein localises to the secreted. It is found in the cell surface. The enzyme catalyses (2R)-2-phosphoglycerate = phosphoenolpyruvate + H2O. It functions in the pathway carbohydrate degradation; glycolysis; pyruvate from D-glyceraldehyde 3-phosphate: step 4/5. Functionally, catalyzes the reversible conversion of 2-phosphoglycerate (2-PG) into phosphoenolpyruvate (PEP). It is essential for the degradation of carbohydrates via glycolysis. In Pectobacterium atrosepticum (strain SCRI 1043 / ATCC BAA-672) (Erwinia carotovora subsp. atroseptica), this protein is Enolase.